We begin with the raw amino-acid sequence, 1251 residues long: DNA repair protein REV1 (1251 aa).

The 88-residue stretch at 44–131 (TSSTIFSGVA…RLLSYIPYQL (88 aa)) folds into the BRCT domain. 2 disordered regions span residues 206–236 (TSPG…NGAL) and 282–342 (STRN…VPSK). Residues 282-320 (STRNTDALRNPHRTNSFSLSPLHSNTKINGAHHSTVQGP) are compositionally biased toward polar residues. Positions 321–342 (SSTKSTSSVSTFSKAAPSVPSK) are enriched in low complexity. The tract at residues 352 to 362 (FYSHSRLHHIS) is interaction with target DNA. Residues arginine 357, 423–427 (DMDCF), 510–516 (SCSYEAR), asparagine 522, and aspartate 570 contribute to the dCTP site. Positions 419 to 653 (IMHVDMDCFF…QLVTNLPGVG (235 aa)) constitute a UmuC domain. Aspartate 423 serves as a coordination point for Mg(2+). Aspartate 570 and glutamate 571 together coordinate Mg(2+). 2 interaction with target DNA regions span residues 653-656 (GHSM) and 709-717 (RKSVSAEIN). Disordered regions lie at residues 1035–1096 (AYDQ…KLLN) and 1119–1147 (HEGP…LQSD). A compositionally biased stretch (polar residues) spans 1043–1056 (GENSTHQQSASASV). A compositionally biased stretch (basic residues) spans 1070–1079 (EKKRNKKKKT). The Nuclear localization signal signature appears at 1071–1078 (KKRNKKKK). A compositionally biased stretch (basic and acidic residues) spans 1119–1129 (HEGPPAEKPLE). The span at 1132–1146 (SASTSGVPGLSSLQS) shows a compositional bias: polar residues. The segment at 1150–1249 (GCVRPPAPNL…LQQTYGSTLK (100 aa)) is protein interaction domain; mediates interaction with DNA polymerase zeta.

This sequence belongs to the DNA polymerase type-Y family. Monomer. Interacts with the DNA polymerase zeta which is composed of REV3L and MAD2L2; the interaction with MAD2L2 is direct and requires that REV3L is in its closed conformation. Interacts with POLH, POLI and POLK. May bind ITGA3. Interacts with FAAP20/C1orf86. Ubiquitous.

It localises to the nucleus. Functionally, deoxycytidyl transferase involved in DNA repair. Transfers a dCMP residue from dCTP to the 3'-end of a DNA primer in a template-dependent reaction. May assist in the first step in the bypass of abasic lesions by the insertion of a nucleotide opposite the lesion. Required for normal induction of mutations by physical and chemical agents. This Homo sapiens (Human) protein is DNA repair protein REV1 (REV1).